Reading from the N-terminus, the 149-residue chain is ER export of PMA1 protein 1 (149 aa).

Over 1–6 the chain is Lumenal; it reads MNLYGY. A helical; Signal-anchor for type II membrane protein membrane pass occupies residues 7–27; sequence FLLLIIVIAFIALLPLFSGIG. The Cytoplasmic segment spans residues 28-149; it reads TFKLTKPKSS…KKNEAYEGFV (122 aa).

As to quaternary structure, interacts with PMA1 and PSG1.

The protein resides in the endoplasmic reticulum membrane. The protein localises to the cytoplasmic vesicle. Its subcellular location is the COPI-coated vesicle membrane. It localises to the COPII-coated vesicle membrane. It is found in the golgi apparatus membrane. Its function is as follows. Specific cargo receptor protein for the plasma membrane ATPase PMA1 that acts with PSG1 to promote the transport and maturation of PMA1. EXP1 and PSG1 probably act sequentially to promote PMA1 sorting between the ER and the Golgi, with EXP1 promoting PMA1 export from the ER to the Golgi while PSG1 has a role in PMA1 maturation or quality control in the Golgi. The protein is ER export of PMA1 protein 1 of Saccharomyces cerevisiae (strain ATCC 204508 / S288c) (Baker's yeast).